The chain runs to 415 residues: Serine--tRNA ligase (415 aa).

231–233 contacts L-serine; that stretch reads TAE. 262–264 is a binding site for ATP; the sequence is RSE. E285 contacts L-serine. Residue 349 to 352 coordinates ATP; sequence EISS. S383 contacts L-serine.

The protein belongs to the class-II aminoacyl-tRNA synthetase family. Type-1 seryl-tRNA synthetase subfamily. In terms of assembly, homodimer. The tRNA molecule binds across the dimer.

The protein resides in the cytoplasm. The enzyme catalyses tRNA(Ser) + L-serine + ATP = L-seryl-tRNA(Ser) + AMP + diphosphate + H(+). The catalysed reaction is tRNA(Sec) + L-serine + ATP = L-seryl-tRNA(Sec) + AMP + diphosphate + H(+). It functions in the pathway aminoacyl-tRNA biosynthesis; selenocysteinyl-tRNA(Sec) biosynthesis; L-seryl-tRNA(Sec) from L-serine and tRNA(Sec): step 1/1. Catalyzes the attachment of serine to tRNA(Ser). Is also able to aminoacylate tRNA(Sec) with serine, to form the misacylated tRNA L-seryl-tRNA(Sec), which will be further converted into selenocysteinyl-tRNA(Sec). This is Serine--tRNA ligase from Helicobacter pylori (strain Shi470).